An 819-amino-acid polypeptide reads, in one-letter code: Leucine--tRNA ligase (819 aa).

The short motif at 51–61 is the 'HIGH' region element; it reads PYPSGNLHIGH. The 'KMSKS' region motif lies at 586 to 590; that stretch reads KMSKS. Lys-589 provides a ligand contact to ATP.

Belongs to the class-I aminoacyl-tRNA synthetase family.

The protein resides in the cytoplasm. It carries out the reaction tRNA(Leu) + L-leucine + ATP = L-leucyl-tRNA(Leu) + AMP + diphosphate. In Deinococcus geothermalis (strain DSM 11300 / CIP 105573 / AG-3a), this protein is Leucine--tRNA ligase.